We begin with the raw amino-acid sequence, 439 residues long: Serine/threonine-protein kinase 2 (439 aa).

Residues 87 to 439 (NDDFYHISTG…IFSDWINGRN (353 aa)) form the Protein kinase domain. ATP contacts are provided by residues 93–101 (ISTGGYGIV) and Lys-117. Residue Asp-307 is the Proton acceptor of the active site.

The protein belongs to the protein kinase superfamily. Ser/Thr protein kinase family. In terms of processing, phosphorylated in vivo. Autophosphorylated in vitro.

The protein resides in the host endoplasmic reticulum. The protein localises to the host endoplasmic reticulum-Golgi intermediate compartment. It carries out the reaction L-seryl-[protein] + ATP = O-phospho-L-seryl-[protein] + ADP + H(+). The catalysed reaction is L-threonyl-[protein] + ATP = O-phospho-L-threonyl-[protein] + ADP + H(+). Its function is as follows. Essential serine-protein kinase involved in the early stage of virion morphogenesis. This is Serine/threonine-protein kinase 2 (OPG054) from Monkeypox virus.